The primary structure comprises 85 residues: MAHKKAGGSSRNGRDSESKRLGVKRFGGQVVRAGNIIVRQRGTHFHPGDNVGCGRDYTLFALTEGRVEFKVKGPAGRKYVSVIPA.

The interval 1–23 is disordered; it reads MAHKKAGGSSRNGRDSESKRLGV.

Belongs to the bacterial ribosomal protein bL27 family.

This is Large ribosomal subunit protein bL27 from Methylococcus capsulatus (strain ATCC 33009 / NCIMB 11132 / Bath).